The chain runs to 235 residues: Thaumatin II (235 aa).

A signal peptide spans 1-22; sequence MAATTCFFFLFPFLLLLTLSRA. 8 cysteine pairs are disulfide-bonded: Cys31/Cys226, Cys78/Cys88, Cys93/Cys99, Cys143/Cys215, Cys148/Cys199, Cys156/Cys167, Cys171/Cys180, and Cys181/Cys186. The propeptide at 230–235 is removed in mature form; the sequence is LELEDE.

Belongs to the thaumatin family.

The protein localises to the cytoplasmic vesicle. Taste-modifying protein; intensely sweet-tasting. It is 100000 times sweeter than sucrose on a molar basis. In Thaumatococcus daniellii (Katemfe), this protein is Thaumatin II.